Consider the following 248-residue polypeptide: MEGDCLSCMKYLMFVFNFFIFLGGACLLAIGIWVMVDPTGFREIVAANPLLLTGAYILLAMGGLLFLLGFLGCCGAVRENKCLLLFFFLFILIIFLAELSAAILAFIFRENLTREFFTKELTKHYQGNNDTDVFSATWNSVMITFGCCGVNGPEDFKFASVFRLLTLDSEEVPEACCRREPQSRDGVLLSREECLLGRSLFLNKQGCYTVILNTFETYVYLAGALAIGVLAIELFAMIFAMCLFRGIQ.

Topologically, residues 1-13 (MEGDCLSCMKYLM) are cytoplasmic. The chain crosses the membrane as a helical span at residues 14–34 (FVFNFFIFLGGACLLAIGIWV). The Extracellular portion of the chain corresponds to 35–49 (MVDPTGFREIVAANP). A helical transmembrane segment spans residues 50–70 (LLLTGAYILLAMGGLLFLLGF). The Cytoplasmic segment spans residues 71-83 (LGCCGAVRENKCL). The helical transmembrane segment at 84 to 104 (LLFFFLFILIIFLAELSAAIL) threads the bilayer. Over 105–223 (AFIFRENLTR…TFETYVYLAG (119 aa)) the chain is Extracellular. N-linked (GlcNAc...) asparagine glycans are attached at residues Asn-111 and Asn-129. Residues 224–244 (ALAIGVLAIELFAMIFAMCLF) form a helical membrane-spanning segment. Residues 245–248 (RGIQ) lie on the Cytoplasmic side of the membrane.

It belongs to the tetraspanin (TM4SF) family. Interacts with ORAI1; this interaction regulates ORAI1 exit from the endoplasmic (ER), and/or Golgi, and trafficking to the cell surface. Highly expressed in primary endothelial cells. Expressed in the embryo heart. Weakly expressed the embryo skeletal muscle.

It is found in the membrane. Plays a role in the cell surface localization of ORAI1 and may participate in the regulation of Ca(2+) signaling and the VWF release in response to inflammatory stimuli. The polypeptide is Tetraspanin-18 (Homo sapiens (Human)).